The chain runs to 363 residues: tRNA(Met) cytidine acetate ligase (363 aa).

Residues 7–20 (IAEF…HKYL), G96, N152, and R175 each bind ATP.

This sequence belongs to the TmcAL family.

The protein resides in the cytoplasm. It carries out the reaction cytidine(34) in elongator tRNA(Met) + acetate + ATP = N(4)-acetylcytidine(34) in elongator tRNA(Met) + AMP + diphosphate. In terms of biological role, catalyzes the formation of N(4)-acetylcytidine (ac(4)C) at the wobble position of elongator tRNA(Met), using acetate and ATP as substrates. First activates an acetate ion to form acetyladenylate (Ac-AMP) and then transfers the acetyl group to tRNA to form ac(4)C34. The polypeptide is tRNA(Met) cytidine acetate ligase (Streptococcus thermophilus (strain ATCC BAA-250 / LMG 18311)).